Here is a 271-residue protein sequence, read N- to C-terminus: Putative phosphoenolpyruvate synthase regulatory protein (271 aa).

Position 152-159 (152-159 (GVSRSGKT)) interacts with ADP.

This sequence belongs to the pyruvate, phosphate/water dikinase regulatory protein family. PSRP subfamily.

It catalyses the reaction [pyruvate, water dikinase] + ADP = [pyruvate, water dikinase]-phosphate + AMP + H(+). The enzyme catalyses [pyruvate, water dikinase]-phosphate + phosphate + H(+) = [pyruvate, water dikinase] + diphosphate. Functionally, bifunctional serine/threonine kinase and phosphorylase involved in the regulation of the phosphoenolpyruvate synthase (PEPS) by catalyzing its phosphorylation/dephosphorylation. This is Putative phosphoenolpyruvate synthase regulatory protein from Thiocapsa roseopersicina.